Here is a 559-residue protein sequence, read N- to C-terminus: Urocanate hydratase (559 aa).

NAD(+)-binding positions include 53-54 (GG), Gln-131, 177-179 (GMG), Glu-197, Arg-202, 243-244 (NA), 264-268 (QTSAH), 274-275 (YL), and Tyr-323. The active site involves Cys-411. Gly-493 is an NAD(+) binding site.

It belongs to the urocanase family. It depends on NAD(+) as a cofactor.

The protein localises to the cytoplasm. The enzyme catalyses 4-imidazolone-5-propanoate = trans-urocanate + H2O. It participates in amino-acid degradation; L-histidine degradation into L-glutamate; N-formimidoyl-L-glutamate from L-histidine: step 2/3. Its function is as follows. Catalyzes the conversion of urocanate to 4-imidazolone-5-propionate. The sequence is that of Urocanate hydratase from Pseudomonas paraeruginosa (strain DSM 24068 / PA7) (Pseudomonas aeruginosa (strain PA7)).